The following is a 108-amino-acid chain: Thiosulfate sulfurtransferase GlpE (108 aa).

Residues 17–105 enclose the Rhodanese domain; that stretch reads QEKEAVLVDI…WQRQFPAEVA (89 aa). C65 functions as the Cysteine persulfide intermediate in the catalytic mechanism.

This sequence belongs to the GlpE family.

The protein localises to the cytoplasm. The enzyme catalyses thiosulfate + hydrogen cyanide = thiocyanate + sulfite + 2 H(+). It catalyses the reaction thiosulfate + [thioredoxin]-dithiol = [thioredoxin]-disulfide + hydrogen sulfide + sulfite + 2 H(+). Functionally, transferase that catalyzes the transfer of sulfur from thiosulfate to thiophilic acceptors such as cyanide or dithiols. May function in a CysM-independent thiosulfate assimilation pathway by catalyzing the conversion of thiosulfate to sulfite, which can then be used for L-cysteine biosynthesis. This is Thiosulfate sulfurtransferase GlpE from Escherichia coli O139:H28 (strain E24377A / ETEC).